Consider the following 185-residue polypeptide: MSILISPDNNTGWGLCSAGMYGGAKRRSSQHPVRVRGHYRAPWGAYTRGVISRRTTVDDVIDSVVADAQRYTRPVATSTVDSVIDSVVANARRYAQRKRRLQRRRRRPTAAMTAARAVLRRAQRIGRRAMRRAAASASAGRARRQAARQAAAAIASMAQPRRGNIYWVRDASGVRVPVRSRPPRS.

Position 2 is an N-acetylserine; by host (Ser-2). The propeptide occupies Ser-2–Gly-23. Position 55 is a phosphothreonine; by host (Thr-55). Ser-172 bears the Phosphoserine; by host mark. The Nuclear localization signal motif lies at Arg-175 to Ser-185.

This sequence belongs to the adenoviridae histone-like nucleoprotein family. In terms of assembly, interacts with the core-capsid bridging protein; this interaction bridges the virus core to the capsid. Interacts with host NPM1; this interaction might play a role in placing the pre-histone-like nucleoprotein on the viral DNA or regulating viral gene expression. Interacts with host HMGB1; this interaction inhibits host immune response. Post-translationally, cleaved near the N-terminus by the viral protease during virion maturation to form the mature protein.

The protein localises to the virion. It is found in the host nucleus. It localises to the host nucleolus. Its function is as follows. Plays a role in the inhibition of host immune response within the nucleus. Interacts with cellular nucleosomes and immobilizes the host immune danger signal HMGB1 on chromatin. In turn, prevents HMGB1 release out of the cell and thus decreases inflammation. Also plays a role in the wrapping and condensation of the viral DNA. May also promote viral genome import into the nucleus. The sequence is that of Pre-histone-like nucleoprotein from Human adenovirus F serotype 40 (HAdV-40).